We begin with the raw amino-acid sequence, 278 residues long: Large ribosomal subunit protein uL2 (278 aa).

Disordered stretches follow at residues 33-53 and 221-278; these read LTEGKRKTGGRNNKGHVTSRG and RGVA…KKKR. Positions 269 to 278 are enriched in basic residues; the sequence is IRSRHAKKKR.

This sequence belongs to the universal ribosomal protein uL2 family. In terms of assembly, part of the 50S ribosomal subunit. Forms a bridge to the 30S subunit in the 70S ribosome.

Its function is as follows. One of the primary rRNA binding proteins. Required for association of the 30S and 50S subunits to form the 70S ribosome, for tRNA binding and peptide bond formation. It has been suggested to have peptidyltransferase activity; this is somewhat controversial. Makes several contacts with the 16S rRNA in the 70S ribosome. In Novosphingobium aromaticivorans (strain ATCC 700278 / DSM 12444 / CCUG 56034 / CIP 105152 / NBRC 16084 / F199), this protein is Large ribosomal subunit protein uL2.